Here is a 194-residue protein sequence, read N- to C-terminus: Large ribosomal subunit protein bL17 (194 aa).

A disordered region spans residues 126 to 194 (AEPKQTKART…SPEQTNKQEE (69 aa)). A compositionally biased stretch (basic residues) spans 131–140 (TKARTRRGKG). Composition is skewed to polar residues over residues 144–161 (ATTT…QDMA) and 181–194 (LDTQ…KQEE).

It belongs to the bacterial ribosomal protein bL17 family. As to quaternary structure, part of the 50S ribosomal subunit. Contacts protein L32.

The polypeptide is Large ribosomal subunit protein bL17 (Amoebophilus asiaticus (strain 5a2)).